The following is a 346-amino-acid chain: Protein RecA (346 aa).

67-74 (GPESSGKT) contributes to the ATP binding site.

It belongs to the RecA family.

The protein resides in the cytoplasm. Its function is as follows. Can catalyze the hydrolysis of ATP in the presence of single-stranded DNA, the ATP-dependent uptake of single-stranded DNA by duplex DNA, and the ATP-dependent hybridization of homologous single-stranded DNAs. It interacts with LexA causing its activation and leading to its autocatalytic cleavage. In Mycobacterium marinum (strain ATCC BAA-535 / M), this protein is Protein RecA.